The following is a 160-amino-acid chain: MSVLKKPDLTDPVLLEKLAQNMGHNYYGEPAWPNDLLYTFPVVILGTLACVVGLAVLDPAMVGEPANPFATPLEILPEWYLYPAFQILRVVPNKLLGILLQTAIPLGLMLVPFIENINKFQNPFRRPIAMAVFLFGTLVTLWMGVAATLPIDKFFTLGLF.

3 helical membrane-spanning segments follow: residues 36–56 (LLYTFPVVILGTLACVVGLAV), 95–115 (LLGILLQTAIPLGLMLVPFIE), and 127–147 (PIAMAVFLFGTLVTLWMGVAA).

The protein belongs to the cytochrome b family. PetD subfamily. The 4 large subunits of the cytochrome b6-f complex are cytochrome b6, subunit IV (17 kDa polypeptide, PetD), cytochrome f and the Rieske protein, while the 4 small subunits are PetG, PetL, PetM and PetN. The complex functions as a dimer.

The protein localises to the cellular thylakoid membrane. In terms of biological role, component of the cytochrome b6-f complex, which mediates electron transfer between photosystem II (PSII) and photosystem I (PSI), cyclic electron flow around PSI, and state transitions. In Prochlorothrix hollandica, this protein is Cytochrome b6-f complex subunit 4.